We begin with the raw amino-acid sequence, 1252 residues long: Myosin-3 (1252 aa).

Residues valine 36 to aspartate 715 form the Myosin motor domain. An ATP-binding site is contributed by glycine 129–threonine 136. A Phosphoserine modification is found at serine 357. Residues serine 404–alanine 486 are actin-binding. IQ domains are found at residues tyrosine 719–alanine 739 and alanine 740–lysine 767. The TH1 domain maps to lysine 773 to proline 963. 3 disordered regions span residues lysine 988 to valine 1086, tyrosine 1106 to leucine 1136, and isoleucine 1203 to tryptophan 1252. Low complexity predominate over residues lysine 997 to alanine 1016. 3 stretches are compositionally biased toward polar residues: residues proline 1050–valine 1063, tyrosine 1106–tyrosine 1121, and isoleucine 1203–leucine 1219. Positions serine 1116–glycine 1178 constitute an SH3 domain. Over residues serine 1238 to tryptophan 1252 the composition is skewed to acidic residues.

The protein belongs to the TRAFAC class myosin-kinesin ATPase superfamily. Myosin family. Post-translationally, phosphorylation of the TEDS site (Ser-357) is required for the polarization of the actin cytoskeleton. Phosphorylation probably activates the myosin-I ATPase activity.

Its subcellular location is the cytoplasm. It is found in the cytoskeleton. The protein resides in the actin patch. Type-I myosin implicated in the organization of the actin cytoskeleton. Required for proper actin cytoskeleton polarization. At the cell cortex, assembles in patch-like structures together with proteins from the actin-polymerizing machinery and promotes actin assembly. Functions as actin nucleation-promoting factor (NPF) for the Arp2/3 complex. The protein is Myosin-3 (MYO3) of Candida glabrata (strain ATCC 2001 / BCRC 20586 / JCM 3761 / NBRC 0622 / NRRL Y-65 / CBS 138) (Yeast).